The primary structure comprises 330 residues: Cytosolic iron-sulfur protein assembly protein 1 (330 aa).

7 WD repeats span residues 12–53 (LYKE…DVLD), 56–95 (AHKK…DRTF), 105–144 (GHEN…EEYE), 151–190 (EHSQ…WECV), 195–236 (GHEG…EDDQ), 248–286 (VHKR…WKVF), and 292–330 (CHGV…EKAA).

Belongs to the WD repeat CIA1 family. Interacts with NAR1.

It is found in the cytoplasm. The protein resides in the nucleus. Functionally, essential component of the cytosolic iron-sulfur (Fe/S) protein assembly machinery. Required for the maturation of extramitochondrial Fe/S proteins. The polypeptide is Cytosolic iron-sulfur protein assembly protein 1 (Saccharomyces cerevisiae (strain ATCC 204508 / S288c) (Baker's yeast)).